Reading from the N-terminus, the 288-residue chain is Homoserine kinase (288 aa).

79–89 (PPARGLGSSSA) provides a ligand contact to ATP.

It belongs to the GHMP kinase family. Homoserine kinase subfamily.

It localises to the cytoplasm. It carries out the reaction L-homoserine + ATP = O-phospho-L-homoserine + ADP + H(+). It functions in the pathway amino-acid biosynthesis; L-threonine biosynthesis; L-threonine from L-aspartate: step 4/5. Catalyzes the ATP-dependent phosphorylation of L-homoserine to L-homoserine phosphate. This Listeria monocytogenes serovar 1/2a (strain ATCC BAA-679 / EGD-e) protein is Homoserine kinase.